Here is a 253-residue protein sequence, read N- to C-terminus: 5-oxoprolinase subunit A (253 aa).

Belongs to the LamB/PxpA family. Forms a complex composed of PxpA, PxpB and PxpC.

The catalysed reaction is 5-oxo-L-proline + ATP + 2 H2O = L-glutamate + ADP + phosphate + H(+). Functionally, catalyzes the cleavage of 5-oxoproline to form L-glutamate coupled to the hydrolysis of ATP to ADP and inorganic phosphate. The protein is 5-oxoprolinase subunit A of Bacillus cereus (strain ZK / E33L).